Consider the following 98-residue polypeptide: Small ribosomal subunit protein uS19 (98 aa).

The interval 74–98 (FAPTRNYRGHAGGKSEKGGSAPRKK) is disordered.

Belongs to the universal ribosomal protein uS19 family.

Its function is as follows. Protein S19 forms a complex with S13 that binds strongly to the 16S ribosomal RNA. In Chlorobium chlorochromatii (strain CaD3), this protein is Small ribosomal subunit protein uS19.